The sequence spans 158 residues: S-ribosylhomocysteine lyase (158 aa).

Positions 54, 58, and 124 each coordinate Fe cation.

This sequence belongs to the LuxS family. Homodimer. The cofactor is Fe cation.

The catalysed reaction is S-(5-deoxy-D-ribos-5-yl)-L-homocysteine = (S)-4,5-dihydroxypentane-2,3-dione + L-homocysteine. Involved in the synthesis of autoinducer 2 (AI-2) which is secreted by bacteria and is used to communicate both the cell density and the metabolic potential of the environment. The regulation of gene expression in response to changes in cell density is called quorum sensing. Catalyzes the transformation of S-ribosylhomocysteine (RHC) to homocysteine (HC) and 4,5-dihydroxy-2,3-pentadione (DPD). The polypeptide is S-ribosylhomocysteine lyase (Lactiplantibacillus plantarum (strain ATCC BAA-793 / NCIMB 8826 / WCFS1) (Lactobacillus plantarum)).